A 308-amino-acid chain; its full sequence is Isoflavone reductase homolog (308 aa).

Residues 11–17 (GGTGYIG), Arg36, and Lys45 each bind NADP(+). Lys133 (proton acceptor) is an active-site residue. Arg137 is an NADP(+) binding site.

This sequence belongs to the NmrA-type oxidoreductase family. Isoflavone reductase subfamily.

The protein resides in the cytoplasm. The sequence is that of Isoflavone reductase homolog from Solanum tuberosum (Potato).